The chain runs to 193 residues: Putative F-box protein At1g31072 (193 aa).

One can recognise an F-box domain in the interval 4–53 (EKTLDSIPIDVFLDIFSRLPAKSVGRSCCVSNRWASILGSQDFKELFLTM).

This Arabidopsis thaliana (Mouse-ear cress) protein is Putative F-box protein At1g31072.